The sequence spans 340 residues: Sterol-4-alpha-carboxylate 3-dehydrogenase erg26, decarboxylating (340 aa).

The active-site Proton acceptor is the Tyr-144. Lys-148 provides a ligand contact to NAD(+).

Belongs to the 3-beta-HSD family. In terms of assembly, heterotetramer of erg25, erg26, erg27 and erg28. Erg28 acts as a scaffold to tether erg27 and other 4,4-demethylation-related enzymes, forming a demethylation enzyme complex, in the endoplasmic reticulum.

It localises to the endoplasmic reticulum membrane. The enzyme catalyses 4beta-methylzymosterol-4alpha-carboxylate + NADP(+) = 3-dehydro-4-methylzymosterol + CO2 + NADPH. Its pathway is steroid biosynthesis; zymosterol biosynthesis; zymosterol from lanosterol: step 4/6. It functions in the pathway steroid metabolism; ergosterol biosynthesis. Sterol-4-alpha-carboxylate 3-dehydrogenase; part of the third module of ergosterol biosynthesis pathway that includes by the late steps of the pathway. Erg26 is a catalytic component of the C-4 demethylation complex that catalyzes the oxidative decarboxylation that results in a reduction of the 3-beta-hydroxy group at the C-3 carbon to an oxo group. The third module or late pathway involves the ergosterol synthesis itself through consecutive reactions that mainly occur in the endoplasmic reticulum (ER) membrane. Firstly, the squalene synthase erg9 catalyzes the condensation of 2 farnesyl pyrophosphate moieties to form squalene, which is the precursor of all steroids. Secondly, squalene is converted into lanosterol by the consecutive action of the squalene epoxidase erg1 and the lanosterol synthase erg7. The lanosterol 14-alpha-demethylase erg11/cyp1 catalyzes C14-demethylation of lanosterol to produce 4,4'-dimethyl cholesta-8,14,24-triene-3-beta-ol. In the next steps, a complex process involving various demethylation, reduction and desaturation reactions catalyzed by the C-14 reductase erg24 and the C-4 demethylation complex erg25-erg26-erg27 leads to the production of zymosterol. Erg28 likely functions in the C-4 demethylation complex reaction by tethering erg26 and Erg27 to the endoplasmic reticulum or to facilitate interaction between these proteins. Then, the sterol 24-C-methyltransferase erg6 catalyzes the methyl transfer from S-adenosyl-methionine to the C-24 of zymosterol to form fecosterol. The C-8 sterol isomerase erg2 catalyzes the reaction which results in unsaturation at C-7 in the B ring of sterols and thus converts fecosterol to episterol. The sterol-C5-desaturases erg31 and erg32 then catalyze the introduction of a C-5 double bond in the B ring to produce 5-dehydroepisterol. The C-22 sterol desaturase erg5 further converts 5-dehydroepisterol into ergosta-5,7,22,24(28)-tetraen-3beta-ol by forming the C-22(23) double bond in the sterol side chain. Finally, ergosta-5,7,22,24(28)-tetraen-3beta-ol is substrate of the C-24(28) sterol reductase erg4 to produce ergosterol. In the genus Schizosaccharomyces, a second route exists between lanosterol and fecosterol, via the methylation of lanosterol to eburicol by erg6, followed by C14-demethylation by erg11/cyp1 and C4-demethylation by the demethylation complex erg25-erg26-erg27. The polypeptide is Sterol-4-alpha-carboxylate 3-dehydrogenase erg26, decarboxylating (Schizosaccharomyces pombe (strain 972 / ATCC 24843) (Fission yeast)).